Here is a 257-residue protein sequence, read N- to C-terminus: UPF0246 protein Shewana3_3143 (257 aa).

It belongs to the UPF0246 family.

The polypeptide is UPF0246 protein Shewana3_3143 (Shewanella sp. (strain ANA-3)).